We begin with the raw amino-acid sequence, 925 residues long: Protein translocase subunit SecA (925 aa).

ATP-binding positions include glutamine 87, glycine 105–threonine 109, and aspartate 531. Residues alanine 867 to proline 909 are disordered. Over residues glutamine 895–arginine 906 the composition is skewed to basic and acidic residues. The Zn(2+) site is built by cysteine 910, cysteine 912, cysteine 921, and histidine 922.

This sequence belongs to the SecA family. In terms of assembly, monomer and homodimer. Part of the essential Sec protein translocation apparatus which comprises SecA, SecYEG and auxiliary proteins SecDF-YajC and YidC. Zn(2+) serves as cofactor.

The protein localises to the cell inner membrane. It is found in the cytoplasm. The enzyme catalyses ATP + H2O + cellular proteinSide 1 = ADP + phosphate + cellular proteinSide 2.. Functionally, part of the Sec protein translocase complex. Interacts with the SecYEG preprotein conducting channel. Has a central role in coupling the hydrolysis of ATP to the transfer of proteins into and across the cell membrane, serving both as a receptor for the preprotein-SecB complex and as an ATP-driven molecular motor driving the stepwise translocation of polypeptide chains across the membrane. The sequence is that of Protein translocase subunit SecA from Thioalkalivibrio sulfidiphilus (strain HL-EbGR7).